A 159-amino-acid polypeptide reads, in one-letter code: Transcription elongation factor GreA (159 aa).

Positions 7-72 (MTVRGAEKLR…IQEIESKLSN (66 aa)) form a coiled coil.

Belongs to the GreA/GreB family.

In terms of biological role, necessary for efficient RNA polymerase transcription elongation past template-encoded arresting sites. The arresting sites in DNA have the property of trapping a certain fraction of elongating RNA polymerases that pass through, resulting in locked ternary complexes. Cleavage of the nascent transcript by cleavage factors such as GreA or GreB allows the resumption of elongation from the new 3'terminus. GreA releases sequences of 2 to 3 nucleotides. In Buchnera aphidicola subsp. Schizaphis graminum (strain Sg), this protein is Transcription elongation factor GreA.